Here is a 281-residue protein sequence, read N- to C-terminus: Very-long-chain (3R)-3-hydroxyacyl-CoA dehydratase 1 (281 aa).

The Cytoplasmic segment spans residues 1 to 68 (MGKGDWRQGR…RRLGLLATAW (68 aa)). The chain crosses the membrane as a helical span at residues 69 to 88 (LTFYNIAMTAGWLVLAIAMV). Topologically, residues 89-107 (RFYMEKGTHRGLYKSIQKT) are lumenal. Residues 108 to 124 (LKFFQTFALLEVVHCLI) traverse the membrane as a helical segment. The Cytoplasmic segment spans residues 125 to 134 (GIVPTSVLVT). The chain crosses the membrane as a helical span at residues 135-152 (GVQVSSRIFMVWLITHSI). The Lumenal segment spans residues 153 to 158 (KPIQNE). The helical transmembrane segment at 159 to 173 (ESVVLFLVSWTVTEI) threads the bilayer. The Cytoplasmic portion of the chain corresponds to 174-196 (TRYSFYTFSLLDHLPHFIKWARY). Residues 197–214 (NLFIILYPVGVAGELLTI) traverse the membrane as a helical segment. Active-site residues include Tyr-203 and Glu-210. At 215 to 244 (YAALPYVKKSGMFSVRLPNKYNVSFDYYYF) the chain is on the lumenal side. Residue Asn-236 is glycosylated (N-linked (GlcNAc...) asparagine). Residues 245–262 (LLITMASYIPLFPQLYFH) form a helical membrane-spanning segment. At 263-281 (MLRQRRKVLHGEVIAEKDD) the chain is on the cytoplasmic side.

It belongs to the very long-chain fatty acids dehydratase HACD family. As to quaternary structure, may interact with enzymes of the ELO family (including ELOVL1); with those enzymes that mediate condensation, the first of the four steps of the reaction cycle responsible for fatty acids elongation, may be part of a larger fatty acids elongase complex. Interacts with TECR. In terms of processing, N-glycosylated. As to expression, expressed at high levels in heart, skeletal muscle and testis, weak expression in kidney and liver.

Its subcellular location is the endoplasmic reticulum membrane. It carries out the reaction a very-long-chain (3R)-3-hydroxyacyl-CoA = a very-long-chain (2E)-enoyl-CoA + H2O. The catalysed reaction is (3R)-hydroxyhexadecanoyl-CoA = (2E)-hexadecenoyl-CoA + H2O. It catalyses the reaction (3R)-hydroxyoctadecanoyl-CoA = (2E)-octadecenoyl-CoA + H2O. The enzyme catalyses (3R)-hydroxyeicosanoyl-CoA = (2E)-eicosenoyl-CoA + H2O. It carries out the reaction (3R)-hydroxydocosanoyl-CoA = (2E)-docosenoyl-CoA + H2O. The catalysed reaction is (3R)-hydroxytetracosanoyl-CoA = (2E)-tetracosenoyl-CoA + H2O. It catalyses the reaction (3R)-hydroxyhexacosanoyl-CoA = (2E)-hexacosenoyl-CoA + H2O. It participates in lipid metabolism; fatty acid biosynthesis. This is Very-long-chain (3R)-3-hydroxyacyl-CoA dehydratase 1 from Mus musculus (Mouse).